We begin with the raw amino-acid sequence, 342 residues long: Phosphate acyltransferase (342 aa).

The protein belongs to the PlsX family. In terms of assembly, homodimer. Probably interacts with PlsY.

Its subcellular location is the cytoplasm. It catalyses the reaction a fatty acyl-[ACP] + phosphate = an acyl phosphate + holo-[ACP]. It participates in lipid metabolism; phospholipid metabolism. Catalyzes the reversible formation of acyl-phosphate (acyl-PO(4)) from acyl-[acyl-carrier-protein] (acyl-ACP). This enzyme utilizes acyl-ACP as fatty acyl donor, but not acyl-CoA. This Shewanella amazonensis (strain ATCC BAA-1098 / SB2B) protein is Phosphate acyltransferase.